The primary structure comprises 969 residues: Translation initiation factor IF-2 (969 aa).

The disordered stretch occupies residues 50–370 (SFASKSAPAN…QAPSVGGVRL (321 aa)). Positions 54-76 (KSAPANGAKPGPAASARPGAKPT) are enriched in low complexity. Pro residues predominate over residues 77–87 (PGGPRPGPRTP). A compositionally biased stretch (low complexity) spans 88-102 (APAASAPQAPAEQTA). Residues 112-124 (AVKPGPAPTPARP) are compositionally biased toward pro residues. Residues 125–164 (AAPEAPAAKAAPEAPAQRPTPGGPRPGQQQQRPGAPAQGG) are compositionally biased toward low complexity. Positions 240 to 267 (PGGPRPSPGSMPPRPNPGAMPQRTPRPG) are enriched in pro residues. Residues 269–340 (SAGGRPGRPG…GAAGAFGRPG (72 aa)) are compositionally biased toward gly residues. The segment covering 344–353 (RRGRKSKRQK) has biased composition (basic residues). A tr-type G domain is found at 465 to 636 (VRPPVVTVMG…AVLLTADAAL (172 aa)). Positions 474 to 481 (GHVDHGKT) are G1. 474-481 (GHVDHGKT) is a GTP binding site. The segment at 499-503 (GITQH) is G2. The interval 524-527 (DTPG) is G3. Residues 524 to 528 (DTPGH) and 578 to 581 (NKID) contribute to the GTP site. Residues 578–581 (NKID) are G4. Residues 614-616 (SAK) form a G5 region.

Belongs to the TRAFAC class translation factor GTPase superfamily. Classic translation factor GTPase family. IF-2 subfamily.

The protein localises to the cytoplasm. Functionally, one of the essential components for the initiation of protein synthesis. Protects formylmethionyl-tRNA from spontaneous hydrolysis and promotes its binding to the 30S ribosomal subunits. Also involved in the hydrolysis of GTP during the formation of the 70S ribosomal complex. The protein is Translation initiation factor IF-2 of Nocardia farcinica (strain IFM 10152).